We begin with the raw amino-acid sequence, 331 residues long: Glucan endo-1,3-beta-glucosidase, acidic isoform GL161 (331 aa).

Positions 1–9 are cleaved as a signal peptide; it reads MCSIQIIGA. Position 10 is a pyrrolidone carboxylic acid (Gln10). N-linked (GlcNAc...) asparagine glycosylation is found at Asn55 and Asn75. Glu244 acts as the Nucleophile in catalysis.

This sequence belongs to the glycosyl hydrolase 17 family. As to expression, is expressed primarily in epidermal cell of healthy plant, and following induction by ethylene, accumulates in mesophyll cells.

The protein localises to the secreted. The protein resides in the extracellular space. The catalysed reaction is Hydrolysis of (1-&gt;3)-beta-D-glucosidic linkages in (1-&gt;3)-beta-D-glucans.. Functionally, is thought to be an important plant defense-related product against fungal pathogens. The chain is Glucan endo-1,3-beta-glucosidase, acidic isoform GL161 from Nicotiana tabacum (Common tobacco).